A 428-amino-acid chain; its full sequence is Enolase (428 aa).

Gln163 lines the (2R)-2-phosphoglycerate pocket. Glu205 acts as the Proton donor in catalysis. Mg(2+) contacts are provided by Asp242, Glu285, and Asp312. The (2R)-2-phosphoglycerate site is built by Lys337, Arg366, Ser367, and Lys388. Lys337 functions as the Proton acceptor in the catalytic mechanism.

Belongs to the enolase family. Requires Mg(2+) as cofactor.

Its subcellular location is the cytoplasm. The protein resides in the secreted. It is found in the cell surface. It carries out the reaction (2R)-2-phosphoglycerate = phosphoenolpyruvate + H2O. Its pathway is carbohydrate degradation; glycolysis; pyruvate from D-glyceraldehyde 3-phosphate: step 4/5. Functionally, catalyzes the reversible conversion of 2-phosphoglycerate (2-PG) into phosphoenolpyruvate (PEP). It is essential for the degradation of carbohydrates via glycolysis. This chain is Enolase, found in Novosphingobium aromaticivorans (strain ATCC 700278 / DSM 12444 / CCUG 56034 / CIP 105152 / NBRC 16084 / F199).